A 214-amino-acid polypeptide reads, in one-letter code: Large ribosomal subunit protein uL3 (214 aa).

N5-methylglutamine is present on Q151.

It belongs to the universal ribosomal protein uL3 family. In terms of assembly, part of the 50S ribosomal subunit. Forms a cluster with proteins L14 and L19. Methylated by PrmB.

Its function is as follows. One of the primary rRNA binding proteins, it binds directly near the 3'-end of the 23S rRNA, where it nucleates assembly of the 50S subunit. The protein is Large ribosomal subunit protein uL3 of Magnetococcus marinus (strain ATCC BAA-1437 / JCM 17883 / MC-1).